The chain runs to 149 residues: Ribosome-binding factor A (149 aa).

It belongs to the RbfA family. Monomer. Binds 30S ribosomal subunits, but not 50S ribosomal subunits or 70S ribosomes.

The protein resides in the cytoplasm. In terms of biological role, one of several proteins that assist in the late maturation steps of the functional core of the 30S ribosomal subunit. Associates with free 30S ribosomal subunits (but not with 30S subunits that are part of 70S ribosomes or polysomes). Required for efficient processing of 16S rRNA. May interact with the 5'-terminal helix region of 16S rRNA. This chain is Ribosome-binding factor A, found in Caulobacter vibrioides (strain ATCC 19089 / CIP 103742 / CB 15) (Caulobacter crescentus).